Consider the following 714-residue polypeptide: FERM domain-containing protein 7 (714 aa).

The region spanning 2 to 282 (LHLKVQFLDD…EYHAFFRLSE (281 aa)) is the FERM domain. A coiled-coil region spans residues 537 to 558 (NIRMKSFQQDLQVLQEAIARTS).

In terms of tissue distribution, expressed in liver, kidney, pancreas and at low levels in brain and heart. Expressed in embryonic brain and developing neural retina.

Its subcellular location is the cell projection. It localises to the neuron projection. The protein resides in the growth cone. Its function is as follows. Plays a role in neurite development, may be through the activation of the GTPase RAC1. Plays a role in the control of eye movement and gaze stability. The chain is FERM domain-containing protein 7 (FRMD7) from Homo sapiens (Human).